The sequence spans 437 residues: Protein RecA (437 aa).

ATP is bound at residue 69 to 76 (GPESSGKT). The disordered stretch occupies residues 343-437 (HDAAVRTSPD…GNGKSVKRKG (95 aa)). 3 stretches are compositionally biased toward polar residues: residues 350-371 (SPDT…SGSP), 380-391 (GAVNNSRDSTGG), and 400-426 (LNLS…NQKP).

The protein belongs to the RecA family.

It localises to the cytoplasm. Can catalyze the hydrolysis of ATP in the presence of single-stranded DNA, the ATP-dependent uptake of single-stranded DNA by duplex DNA, and the ATP-dependent hybridization of homologous single-stranded DNAs. It interacts with LexA causing its activation and leading to its autocatalytic cleavage. This chain is Protein RecA, found in Tropheryma whipplei (strain Twist) (Whipple's bacillus).